Here is a 101-residue protein sequence, read N- to C-terminus: Small ribosomal subunit protein uS14A (101 aa).

Residues 32-71 (RRPGTPEPERNRAVEELRRQPRDASATRVRNRDSVDGRPR) are disordered. 2 stretches are compositionally biased toward basic and acidic residues: residues 38–53 (EPER…RQPR) and 61–70 (RNRDSVDGRP).

The protein belongs to the universal ribosomal protein uS14 family. In terms of assembly, part of the 30S ribosomal subunit. Contacts proteins S3 and S10.

Its function is as follows. Binds 16S rRNA, required for the assembly of 30S particles and may also be responsible for determining the conformation of the 16S rRNA at the A site. The polypeptide is Small ribosomal subunit protein uS14A (Streptomyces griseus subsp. griseus (strain JCM 4626 / CBS 651.72 / NBRC 13350 / KCC S-0626 / ISP 5235)).